A 357-amino-acid chain; its full sequence is Protein XRP2 (357 aa).

Basic residues predominate over residues 1-11 (MGCFFSKRRKP). Residues 1-39 (MGCFFSKRRKPAQGGQQQGASQEPAAGEEKAPQYSWDQR) are disordered. Residue Gly-2 is the site of N-myristoyl glycine attachment. A lipid anchor (S-palmitoyl cysteine) is attached at Cys-3. Residues 12–25 (AQGGQQQGASQEPA) are compositionally biased toward low complexity. The C-CAP/cofactor C-like domain occupies 32-186 (PQYSWDQRAK…TWSNIHDFTP (155 aa)). GTP-binding positions include 105-106 (GS) and 122-125 (QQFR).

The protein belongs to the TBCC family. Post-translationally, myristoylated on Gly-2; which may be required for membrane targeting. Palmitoylated on Cys-3; which may be required for plasma membrane targeting.

The protein resides in the cell membrane. Acts as a GTPase-activating protein (GAP) for tubulin in concert with tubulin-specific chaperone C, but does not enhance tubulin heterodimerization. Acts as a GTPase-activating protein. May act as guanine nucleotide dissociation inhibitor towards ADP-ribosylation factor-like proteins. The polypeptide is Protein XRP2 (RP2) (Gallus gallus (Chicken)).